The following is a 264-amino-acid chain: MKAVVLAVAVLFLTGSQARHFWQGDEPQTSWDRMKDFAALYVDAIQESGKDCAAQLDASALGKQLNLNLLANWNTLTSTFNNLREQLGSVTKEFWDNLGEDTVWLRQQMNKDLEEVKQKVQSYLDNFQKKVNEEVERYRDKVQPLGKELHKDAQQKLKELQEKLAPLGQDIRQRAREYVDALRTHLGSYTQGMRQGLAKRLEALKESAPVSEYQVKASKHLKTFSEKAKPALEDLRQGLMPVMESLKASFLSSIDQASKQLSAQ.

Residues 1 to 18 (MKAVVLAVAVLFLTGSQA) form the signal peptide. Repeat copies occupy residues 67 to 88 (LNLL…EQLG) and 89 to 110 (SVTK…QQMN). The segment at 67-264 (LNLLANWNTL…DQASKQLSAQ (198 aa)) is 10 X approximate tandem repeats. M109 bears the Methionine sulfoxide mark. One copy of the 3; half-length repeat lies at 111–121 (KDLEEVKQKVQ). Tandem repeats lie at residues 122-142 (SYLD…RDKV), 144-165 (PLGK…EKLA), 166-187 (PLGQ…THLG), 188-208 (SYTQ…KESA), and 209-229 (PVSE…EKAK). A Methionine sulfoxide modification is found at M193. A 9; half-length repeat occupies 230–240 (PALEDLRQGLM). M240 carries the post-translational modification Methionine sulfoxide. Repeat unit 10 spans residues 241–264 (PVMESLKASFLSSIDQASKQLSAQ).

Belongs to the apolipoprotein A1/A4/E family. Homodimer. Interacts with APOA1BP and CLU. Component of a sperm activating protein complex (SPAP), consisting of APOA1, an immunoglobulin heavy chain, an immunoglobulin light chain and albumin. Interacts with NDRG1. Interacts with SCGB3A2. Interacts with NAXE and YJEFN3. In terms of processing, glycosylated. Post-translationally, palmitoylated. Phosphorylation sites are present in the extracellular medium. As to expression, major protein of plasma HDL, also found in chylomicrons.

The protein resides in the secreted. In terms of biological role, participates in the reverse transport of cholesterol from tissues to the liver for excretion by promoting cholesterol efflux from tissues and by acting as a cofactor for the lecithin cholesterol acyltransferase (LCAT). As part of the SPAP complex, activates spermatozoa motility. The protein is Apolipoprotein A-I (Apoa1) of Heterocephalus glaber (Naked mole rat).